The chain runs to 214 residues: Methyltransferase HEMK2 (214 aa).

Residues T29, E51, G53, D77, D103, L104, and N122 each coordinate S-adenosyl-L-homocysteine. Positions 29, 51, 53, 77, 103, 104, and 122 each coordinate S-adenosyl-L-methionine. An a protein-binding site is contributed by N122.

Belongs to the eukaryotic/archaeal PrmC-related family. Heterodimer; heterodimerization with TRMT112 is required for S-adenosyl-L-methionine-binding. In terms of assembly, does not interact with TRMT112. Post-translationally, ubiquitinated, leading to its degradation by the proteasome. As to expression, widely expressed, with highest expression in parathyroid and pituitary glands, followed by adrenal gland and kidney, and lowest expression in leukocytes and mammary gland.

It is found in the nucleus. The enzyme catalyses L-lysyl-[histone] + S-adenosyl-L-methionine = N(6)-methyl-L-lysyl-[histone] + S-adenosyl-L-homocysteine + H(+). It catalyses the reaction L-glutaminyl-[protein] + S-adenosyl-L-methionine = N(5)-methyl-L-glutaminyl-[protein] + S-adenosyl-L-homocysteine + H(+). It carries out the reaction methylarsonous acid + S-adenosyl-L-methionine = dimethylarsinate + S-adenosyl-L-homocysteine + 2 H(+). Functionally, methyltransferase that can methylate proteins and, to a lower extent, arsenic. Catalytic subunit of a heterodimer with TRMT112, which monomethylates 'Lys-12' of histone H4 (H4K12me1), a modification present at the promoters of numerous genes encoding cell cycle regulators. Catalytic subunit of a heterodimer with TRMT112, which catalyzes N5-methylation of Glu residue of proteins with a Gly-Gln-Xaa-Xaa-Xaa-Arg motif. Methylates ETF1 on 'Gln-185'; ETF1 needs to be complexed to ERF3 in its GTP-bound form to be efficiently methylated. May also play a role in the modulation of arsenic-induced toxicity by mediating the conversion of monomethylarsonous acid (3+) into the less toxic dimethylarsonic acid. It however only plays a limited role in arsenic metabolism compared with AS3MT. The chain is Methyltransferase HEMK2 from Homo sapiens (Human).